Here is a 185-residue protein sequence, read N- to C-terminus: Ribosome maturation factor RimP (185 aa).

The interval Val-162–Arg-185 is disordered.

Belongs to the RimP family.

Its subcellular location is the cytoplasm. Its function is as follows. Required for maturation of 30S ribosomal subunits. The protein is Ribosome maturation factor RimP of Saccharopolyspora erythraea (strain ATCC 11635 / DSM 40517 / JCM 4748 / NBRC 13426 / NCIMB 8594 / NRRL 2338).